A 793-amino-acid chain; its full sequence is Putative glutamate--cysteine ligase 2-3 (793 aa).

The tract at residues 1–407 (MLASDPRKVG…RFWDRGDTAD (407 aa)) is carboxylate-amine ligase. A disordered region spans residues 367–390 (TEHLPDVEVPPPREPGPKSTGAGR). Residues 408–793 (MTWTESTELD…ALTRLEDQSG (386 aa)) form a peptidase M20 region.

The protein in the C-terminal section; belongs to the glutamate--cysteine ligase type 2 family. YbdK subfamily.

It catalyses the reaction L-cysteine + L-glutamate + ATP = gamma-L-glutamyl-L-cysteine + ADP + phosphate + H(+). ATP-dependent carboxylate-amine ligase which exhibits weak glutamate--cysteine ligase activity. This Rhodococcus jostii (strain RHA1) protein is Putative glutamate--cysteine ligase 2-3.